A 622-amino-acid polypeptide reads, in one-letter code: Glutamyl-tRNA(Gln) amidotransferase subunit B, mitochondrial (622 aa).

The N-terminal 54 residues, 1-54 (MSRIPTRELGRYLLQGQICQRGCVASSVSKSRAKQLGRHPLLPHDRHQPTQARH), are a transit peptide targeting the mitochondrion. The disordered stretch occupies residues 30–67 (KSRAKQLGRHPLLPHDRHQPTQARHAHTVTTTATPTQL). The segment covering 57-67 (TVTTTATPTQL) has biased composition (low complexity).

The protein belongs to the GatB/GatE family. GatB subfamily. In terms of assembly, subunit of the heterotrimeric GatCAB amidotransferase (AdT) complex, composed of A, B and C subunits.

The protein localises to the mitochondrion. It carries out the reaction L-glutamyl-tRNA(Gln) + L-glutamine + ATP + H2O = L-glutaminyl-tRNA(Gln) + L-glutamate + ADP + phosphate + H(+). In terms of biological role, allows the formation of correctly charged Gln-tRNA(Gln) through the transamidation of misacylated Glu-tRNA(Gln) in the mitochondria. The reaction takes place in the presence of glutamine and ATP through an activated gamma-phospho-Glu-tRNA(Gln). This Verticillium alfalfae (strain VaMs.102 / ATCC MYA-4576 / FGSC 10136) (Verticillium wilt of alfalfa) protein is Glutamyl-tRNA(Gln) amidotransferase subunit B, mitochondrial.